The chain runs to 260 residues: Trans-aconitate 2-methyltransferase (260 aa).

This sequence belongs to the methyltransferase superfamily. Tam family.

It is found in the cytoplasm. The catalysed reaction is trans-aconitate + S-adenosyl-L-methionine = (E)-3-(methoxycarbonyl)pent-2-enedioate + S-adenosyl-L-homocysteine. In terms of biological role, catalyzes the S-adenosylmethionine monomethyl esterification of trans-aconitate. This chain is Trans-aconitate 2-methyltransferase, found in Methylobacterium radiotolerans (strain ATCC 27329 / DSM 1819 / JCM 2831 / NBRC 15690 / NCIMB 10815 / 0-1).